The chain runs to 160 residues: Protein MGF 300-2R (160 aa).

It belongs to the asfivirus MGF 300 family.

In terms of biological role, plays a role in virus cell tropism, and may be required for efficient virus replication in macrophages. The protein is Protein MGF 300-2R of Ornithodoros (relapsing fever ticks).